Consider the following 702-residue polypeptide: Phosphoglycerol transferase I (702 aa).

3 helical membrane-spanning segments follow: residues 5-24 (LLVS…RLAW), 73-95 (GYIA…VRIR), and 102-124 (GGGA…SPLY).

This sequence belongs to the OpgB family.

It localises to the cell inner membrane. The enzyme catalyses a phosphatidylglycerol + a membrane-derived-oligosaccharide D-glucose = a 1,2-diacyl-sn-glycerol + a membrane-derived-oligosaccharide 6-(glycerophospho)-D-glucose.. It functions in the pathway glycan metabolism; osmoregulated periplasmic glucan (OPG) biosynthesis. In terms of biological role, transfers a phosphoglycerol residue from phosphatidylglycerol to the membrane-bound nascent glucan backbones. This Xanthomonas axonopodis pv. citri (strain 306) protein is Phosphoglycerol transferase I.